The following is a 1288-amino-acid chain: Disease resistance protein RRS1 (1288 aa).

The region spanning 5-146 is the TIR domain; sequence EKDEEFVCIS…EIVRDVYETH (142 aa). The interval 25 to 26 is important for interaction with RPS4; the sequence is SH. The NB-ARC domain maps to 170–421; the sequence is IGIRCVGIWG…LLEGCGFFPH (252 aa). 179–186 contributes to the ATP binding site; that stretch reads GMPGIGKT. LRR repeat units lie at residues 498–522, 535–553, 554–575, 577–598, 621–646, 665–688, 697–720, 740–764, 766–791, 792–807, 808–829, and 830–852; these read SEEIEGLFLDTSNLRFDLQPSAFKN, NPEVHPVINFPTGSLHSLP, NELRLLHWENYPLKSLPQNFDP, HLVEINMPYSQLQKLWGGTKNL, AENLEVIDLQGCTRLQNFPAAGRLLR, PPNIEKLHLQGTGILALPVSTVKP, LTEIPGLSEELERLTSLLESNSSC, LPNMANLDLNVLDLSGCSSLNSIQG, PRFLKQLYLGGTAIREVPQLPQSLEI, LNAHGSCLRSLPNMAN, LEFLKVLDLSGCSELETIQGFP, and RNLKELYFAGTTLREVPQLPLSL. The Nuclear localization signal signature appears at 986–1003; sequence RKFHCWAPWQVVPKVRKD. Positions 1202–1270 form a DNA-binding region, WRKY; sequence IPAIDEGDLW…YLSEHNHPRP (69 aa). The tract at residues 1267-1288 is disordered; that stretch reads HPRPTKRKALADSTRSTSSSIC. Polar residues predominate over residues 1279–1288; that stretch reads STRSTSSSIC.

Belongs to the disease resistance TIR-NB-LRR family. In terms of assembly, interacts with PopP2, a R.solanacearum type III effector. Interacts with RPS4.

The protein localises to the nucleus. It is found in the cytoplasm. In terms of biological role, transcription factor. Interacts specifically with the W box (5'-(T)TGAC[CT]-3'), a frequently occurring elicitor-responsive cis-acting element. Also acts as a disease resistance protein involved in resistance to fungal and bacterial pathogens, including R.solanacearum, P.syringae pv. tomato and C.higginsianum. Heterodimerization with RPS4 is required to form a functional complex to recognize AvrRps4 and PopP2. Contributes to temperature-conditioned RPS4 auto-immunity. The sequence is that of Disease resistance protein RRS1 from Arabidopsis thaliana (Mouse-ear cress).